The chain runs to 143 residues: ATP synthase epsilon chain (143 aa).

It belongs to the ATPase epsilon chain family. As to quaternary structure, F-type ATPases have 2 components, CF(1) - the catalytic core - and CF(0) - the membrane proton channel. CF(1) has five subunits: alpha(3), beta(3), gamma(1), delta(1), epsilon(1). CF(0) has three main subunits: a, b and c.

The protein localises to the cell membrane. Produces ATP from ADP in the presence of a proton gradient across the membrane. The sequence is that of ATP synthase epsilon chain from Lacticaseibacillus casei (strain BL23) (Lactobacillus casei).